The chain runs to 201 residues: LexA repressor (201 aa).

Positions 28-48 form a DNA-binding region, H-T-H motif; it reads RAEIAARLGFRSPNAAEEHLK. Active-site for autocatalytic cleavage activity residues include serine 118 and lysine 155.

The protein belongs to the peptidase S24 family. In terms of assembly, homodimer.

The enzyme catalyses Hydrolysis of Ala-|-Gly bond in repressor LexA.. Represses a number of genes involved in the response to DNA damage (SOS response), including recA and lexA. In the presence of single-stranded DNA, RecA interacts with LexA causing an autocatalytic cleavage which disrupts the DNA-binding part of LexA, leading to derepression of the SOS regulon and eventually DNA repair. This chain is LexA repressor, found in Photorhabdus laumondii subsp. laumondii (strain DSM 15139 / CIP 105565 / TT01) (Photorhabdus luminescens subsp. laumondii).